The sequence spans 1821 residues: Latent-transforming growth factor beta-binding protein 2 (1821 aa).

Residues M1–A35 form the signal peptide. Disordered regions lie at residues D38–G58 and G81–G165. A heparin-binding region spans residues S94 to V115. 2 stretches are compositionally biased toward low complexity: residues R108–Q120 and Q129–L145. An N-linked (GlcNAc...) asparagine glycan is attached at N181. The EGF-like 1 domain occupies I187 to E219. Disulfide bonds link C191–C201, C195–C207, and C209–C218. Positions P229–P339 are disordered. Positions S232–S249 are heparin-binding. The segment covering P262 to P274 has biased composition (pro residues). Polar residues-rich tracts occupy residues S280–V292 and A304–A314. N343 carries N-linked (GlcNAc...) asparagine glycosylation. L344 to V354 provides a ligand contact to heparin. Positions R375 to D377 match the Cell attachment site motif. Residues R396 to H428 enclose the EGF-like 2 domain. Intrachain disulfides connect C400/C410, C404/C416, and C418/C427. A glycan (N-linked (GlcNAc...) asparagine) is linked at N421. Residue S506 is modified to Phosphoserine. Residues R510–A544 form a disordered region. The TB 1 domain maps to G552–G604. Disulfide bonds link C554/C576, C563/C589, and C577/C592. A glycan (N-linked (GlcNAc...) asparagine) is linked at N616. Residues D622–V662 form the EGF-like 3; calcium-binding domain. 7 disulfides stabilise this stretch: C626–C637, C632–C646, C648–C661, C674–C696, C683–C709, C697–C712, and C698–C724. The TB 2 domain occupies G672–C724. Over residues A744–G757 the composition is skewed to basic and acidic residues. The segment at A744–P772 is disordered. N811 carries N-linked (GlcNAc...) asparagine glycosylation. The EGF-like 4 domain occupies G844–T886. Disulfide bonds link C848-C861, C856-C870, C872-C885, C891-C902, C896-C911, C913-C928, C934-C945, C940-C954, C956-C968, C974-C985, C980-C994, C997-C1008, C1014-C1025, C1020-C1034, C1036-C1049, C1055-C1066, C1061-C1075, C1078-C1091, C1097-C1108, C1103-C1117, C1120-C1133, C1139-C1151, C1146-C1160, C1162-C1174, C1180-C1192, C1186-C1201, C1203-C1216, C1222-C1233, C1228-C1242, C1244-C1257, C1263-C1276, C1271-C1285, C1289-C1301, C1307-C1319, C1313-C1328, C1330-C1343, C1349-C1361, C1356-C1370, C1372-C1386, C1413-C1436, C1423-C1448, C1437-C1451, C1438-C1463, C1489-C1502, C1497-C1511, C1513-C1526, C1532-C1542, C1537-C1551, and C1553-C1566. The region spanning D887 to Q929 is the EGF-like 5; calcium-binding domain. The 40-residue stretch at D930–Q969 folds into the EGF-like 6; calcium-binding domain. The EGF-like 7; calcium-binding domain maps to D970–V1009. Residues D1010 to Q1050 form the EGF-like 8; calcium-binding domain. Residues D1051–E1092 enclose the EGF-like 9; calcium-binding domain. The EGF-like 10; calcium-binding domain maps to D1093 to E1134. Residues D1135 to E1175 enclose the EGF-like 11; calcium-binding domain. Residue N1170 is glycosylated (N-linked (GlcNAc...) asparagine). One can recognise an EGF-like 12; calcium-binding domain in the interval D1176–Q1217. The region spanning D1218 to V1258 is the EGF-like 13; calcium-binding domain. The EGF-like 14; calcium-binding domain maps to D1259–I1302. In terms of domain architecture, EGF-like 15; calcium-binding spans D1303 to V1344. Residue N1309 is glycosylated (N-linked (GlcNAc...) asparagine). Residues D1345–R1387 form the EGF-like 16; calcium-binding domain. The TB 3 domain maps to M1411 to C1463. The N-linked (GlcNAc...) asparagine glycan is linked to N1430. An EGF-like 17; calcium-binding domain is found at D1485 to E1527. One can recognise an EGF-like 18; calcium-binding domain in the interval D1528–M1567. N1568 is a glycosylation site (N-linked (GlcNAc...) asparagine). Residues D1584–C1636 enclose the TB 4 domain. Disulfide bonds link C1586-C1609, C1595-C1621, C1610-C1624, C1611-C1636, C1737-C1748, C1743-C1757, C1759-C1772, C1778-C1793, C1788-C1802, and C1804-C1817. Positions A1639–E1821 are C-terminal domain. One can recognise an EGF-like 19; calcium-binding domain in the interval Q1733 to V1773. Residues D1774–T1818 enclose the EGF-like 20; calcium-binding domain.

It belongs to the LTBP family. Forms part of the large latent transforming growth factor beta precursor complex; removal is essential for activation of complex. Interacts with SDC4. Interacts (via C-terminal domain) with FBN1 (via N-terminal domain) in a Ca(+2)-dependent manner. N-Glycosylated. Post-translationally, contains hydroxylated asparagine residues. In terms of tissue distribution, expressed in the aorta (at protein level). Expressed in lung, weakly expressed in heart, placenta, liver and skeletal muscle.

The protein localises to the secreted. It localises to the extracellular space. The protein resides in the extracellular matrix. Its function is as follows. May play an integral structural role in elastic-fiber architectural organization and/or assembly. The sequence is that of Latent-transforming growth factor beta-binding protein 2 (LTBP2) from Homo sapiens (Human).